The primary structure comprises 289 residues: ATP synthase gamma chain (289 aa).

This sequence belongs to the ATPase gamma chain family. F-type ATPases have 2 components, CF(1) - the catalytic core - and CF(0) - the membrane proton channel. CF(1) has five subunits: alpha(3), beta(3), gamma(1), delta(1), epsilon(1). CF(0) has three main subunits: a, b and c.

The protein localises to the cell inner membrane. Produces ATP from ADP in the presence of a proton gradient across the membrane. The gamma chain is believed to be important in regulating ATPase activity and the flow of protons through the CF(0) complex. In Anaeromyxobacter dehalogenans (strain 2CP-C), this protein is ATP synthase gamma chain.